The sequence spans 193 residues: dCTP deaminase (193 aa).

Residues 110–115 (RSSLAR), D128, 136–138 (VLE), Y171, K178, and Q182 contribute to the dCTP site. Residue E138 is the Proton donor/acceptor of the active site. Residues 169–193 (RPYNSRQDAKYKGQQGAVASRIDKD) form a disordered region.

Belongs to the dCTP deaminase family. In terms of assembly, homotrimer.

The catalysed reaction is dCTP + H2O + H(+) = dUTP + NH4(+). It functions in the pathway pyrimidine metabolism; dUMP biosynthesis; dUMP from dCTP (dUTP route): step 1/2. Functionally, catalyzes the deamination of dCTP to dUTP. This is dCTP deaminase from Erwinia tasmaniensis (strain DSM 17950 / CFBP 7177 / CIP 109463 / NCPPB 4357 / Et1/99).